Reading from the N-terminus, the 330-residue chain is Low affinity immunoglobulin gamma Fc region receptor II (330 aa).

Positions 1-29 (MESNWTVHVFSRTLCHMLLWTAVLNLAAG) are cleaved as a signal peptide. Topologically, residues 30–210 (THDLPKAVVK…QGPKSSRSLP (181 aa)) are extracellular. Ig-like C2-type domains are found at residues 50 to 106 (EDTV…QTRL) and 131 to 189 (GETI…LGRT). 2 disulfides stabilise this stretch: Cys57–Cys99 and Cys138–Cys182. N-linked (GlcNAc...) asparagine glycans are attached at residues Asn65, Asn92, Asn166, and Asn173. A helical transmembrane segment spans residues 211 to 231 (VLTIVAAVTGIAVAAIVIILV). At 232–330 (SLVYLKKKQV…ETEHDYQNHI (99 aa)) the chain is on the cytoplasmic side. Residues 261–330 (VGEYRQPSGG…ETEHDYQNHI (70 aa)) form a disordered region. Tyr290 is modified (phosphotyrosine). An ITIM motif motif is present at residues 307–312 (ITYSLL). Tyr309 is subject to Phosphotyrosine; by SRC-type Tyr-kinases. Tyr326 bears the Phosphotyrosine mark.

In terms of assembly, interacts with FGR. Interacts with LYN. Post-translationally, glycosylated. In terms of processing, when coaggregated to BCR, isoform IIB1 and isoform IIB1' become tyrosine phosphorylated and bind to the SH2 domains of the protein tyrosine phosphatase PTPC1. Phosphorylated by SRC-type Tyr-kinases such as LYN, BLK, FYN and SYK. Widely expressed by cells of hemopoietic origin. The isoforms are differentially expressed. Isoform IIB1 is preferentially expressed by cells of the lymphoid lineage, isoform IIB2 by cells of the myeloid lineage, and isoform IIB3 is released by macrophages and is present in the serum. Isoform IIB1' is expressed in myeloid and lymphoid cell lines, in normal spleen cells, and in resting or LPS-activated B-cells but is not detected in mesenteric lymph node cells.

It is found in the cell membrane. Its subcellular location is the cytoplasm. The protein resides in the cytoskeleton. It localises to the secreted. Functionally, receptor for the Fc region of complexed immunoglobulins gamma. Low affinity receptor. Involved in a variety of effector and regulatory functions such as phagocytosis of antigen-antibody complexes from the circulation and modulation of antibody production by B-cells. Isoform IIB1 and isoform IIB1' form caps but fail to mediate endocytosis or phagocytosis. Isoform IIB2 can mediate the endocytosis of soluble immune complexes via clathrin-coated pits. Isoform IIB1 and isoform IIB2 can down-regulate B-cell, T-cell, and mast cell activation when coaggregated to B-cell receptors for AG (BCR), T-cell receptors for AG (TCR), and Fc receptors, respectively. The polypeptide is Low affinity immunoglobulin gamma Fc region receptor II (Fcgr2) (Mus musculus (Mouse)).